The following is a 1273-amino-acid chain: Ribulose bisphosphate carboxylase small subunit, chloroplastic (1273 aa).

A chloroplast-targeting transit peptide spans 1-134 (MPFDRQPLLS…AVLPFTSEKD (134 aa)). 7 propeptides span residues 269-278 (GMAAMTGEKD), 412-421 (GMAAMTGEKD), 556-565 (GMAAMTGEKD), 699-708 (GMAAMTGEKD), 844-853 (GMAAMTGEKE), 987-996 (GMAAMTGEKD), and 1131-1140 (GMAAMTGEKE).

This sequence belongs to the RuBisCO small chain family. As to quaternary structure, heterohexadecamer of 8 large and 8 small subunits. Post-translationally, eight small subunits are processed from a large polyprotein. All start with the same sequence but there is more heterogeneity at the C-terminus.

The protein localises to the plastid. Its subcellular location is the chloroplast. In terms of biological role, ruBisCO catalyzes two reactions: the carboxylation of D-ribulose 1,5-bisphosphate, the primary event in carbon dioxide fixation, as well as the oxidative fragmentation of the pentose substrate. Both reactions occur simultaneously and in competition at the same active site. Although the small subunit is not catalytic it is essential for maximal activity. In Euglena gracilis, this protein is Ribulose bisphosphate carboxylase small subunit, chloroplastic.